The sequence spans 97 residues: Small integral membrane protein 8 (97 aa).

Positions Met-1–Gly-24 are disordered. The span at Thr-9–Phe-20 shows a compositional bias: basic and acidic residues. The helical transmembrane segment at Pro-48–Leu-67 threads the bilayer.

The protein belongs to the SMIM8 family.

It localises to the membrane. This chain is Small integral membrane protein 8 (SMIM8), found in Pongo abelii (Sumatran orangutan).